Reading from the N-terminus, the 173-residue chain is Photosystem I assembly protein Ycf3 (173 aa).

TPR repeat units follow at residues 35–68 (AFSYYRDGMSAQSEGEYAEALENYYEALKLEEDP), 72–105 (SYILYNIGLIYASNGEYVKALEYYHQGLELNFKL), and 120–153 (GVQAIEDKDTELSKLMFDKAAQYWQQAIKLAPDN).

This sequence belongs to the Ycf3 family.

It is found in the plastid. It localises to the chloroplast thylakoid membrane. Its function is as follows. Essential for the assembly of the photosystem I (PSI) complex. May act as a chaperone-like factor to guide the assembly of the PSI subunits. This chain is Photosystem I assembly protein Ycf3, found in Pyropia yezoensis (Susabi-nori).